The sequence spans 221 residues: GTP-binding nuclear protein Ran-3 (221 aa).

The region spanning 10-174 (DYPSFKLVIV…LYLARKLAGD (165 aa)) is the Small GTPase Ran-type domain. Residue 21–28 (DGGTGKTT) coordinates GTP. The interval 40–48 (KKYEPTIGV) is switch-I. GTP contacts are provided by residues G71, 125-128 (NKVD), and 153-155 (SAK). A switch-II region spans residues 71–87 (GQEKFGGLRDGYYIHGQ). A disordered region spans residues 201-221 (EAELAAAASQPLPDDDDDTFE).

This sequence belongs to the small GTPase superfamily. Ran family. In terms of assembly, found in a nuclear export complex with RanGTP, exportin and pre-miRNA. Interacts with RanBP1a and RanBP1b. Interacts with KPNB1.

The protein localises to the nucleus. GTP-binding protein involved in nucleocytoplasmic transport. Required for the import of protein into the nucleus and also for RNA export. Involved in chromatin condensation and control of cell cycle. The chain is GTP-binding nuclear protein Ran-3 (RAN3) from Arabidopsis thaliana (Mouse-ear cress).